Reading from the N-terminus, the 244-residue chain is LOB domain-containing protein 17 (244 aa).

The 103-residue stretch at Ser-6–Ala-108 folds into the LOB domain.

It belongs to the LOB domain-containing protein family. In terms of tissue distribution, expressed in roots, stems, leaves and flowers.

The polypeptide is LOB domain-containing protein 17 (LBD17) (Arabidopsis thaliana (Mouse-ear cress)).